The chain runs to 398 residues: Calreticulin (398 aa).

An N-terminal signal peptide occupies residues 1 to 19; that stretch reads MKAVVLVVVSLLALSSINC. The N-domain stretch occupies residues 20–197; it reads DVFFEEKFPD…NEKVESGDLE (178 aa). Cysteine 105 and cysteine 137 form a disulfide bridge. Tyrosine 109, lysine 111, tyrosine 128, and aspartate 135 together coordinate an alpha-D-glucoside. 7 tandem repeats follow at residues 191–202, 210–221, 227–238, 244–255, 259–269, 273–283, and 287–297. Positions 191–255 are 4 X approximate repeats; sequence VESGDLEADW…DATKPEDWDD (65 aa). The P-domain stretch occupies residues 198 to 308; sequence ADWDFLPNKK…YTPDSNLYKR (111 aa). A compositionally biased stretch (basic and acidic residues) spans 207–251; it reads KIKDPEAKKPEDWDDKPTIPDPEDKKPEDWDKPEHIPDPDATKPE. Residues 207-257 are disordered; that stretch reads KIKDPEAKKPEDWDDKPTIPDPEDKKPEDWDKPEHIPDPDATKPEDWDDEM. The interval 259-297 is 3 X approximate repeats; that stretch reads GEWEPPMIDNPDYKGVWAPKQIDNPAYKGPWVHPEIDNP. The tract at residues 309 to 398 is C-domain; it reads DEICAVGLDL…AAPVEEHDEL (90 aa). Residue aspartate 317 coordinates an alpha-D-glucoside. The disordered stretch occupies residues 334 to 398; the sequence is DDPAAAKERG…AAPVEEHDEL (65 aa). Residues 337–372 show a composition bias toward basic and acidic residues; it reads AAAKERGEVIKKRQEGEKKMKSEQDEAEREKEKAEK. Acidic residues predominate over residues 373 to 387; the sequence is PDDEEDDEDLDDETG. A Prevents secretion from ER motif is present at residues 395–398; the sequence is HDEL.

The protein belongs to the calreticulin family. As to quaternary structure, monomer. As to expression, expressed in fat bodies. Not expressed in midgut, silk gland, ovary or testis.

The protein resides in the endoplasmic reticulum lumen. Its function is as follows. Molecular calcium-binding chaperone promoting folding, oligomeric assembly and quality control in the ER via the calreticulin/calnexin cycle. This lectin may interact transiently with almost all of the monoglucosylated glycoproteins that are synthesized in the ER. The protein is Calreticulin of Bombyx mori (Silk moth).